The sequence spans 165 residues: Phosphopantetheine adenylyltransferase (165 aa).

Serine 10 contacts substrate. ATP is bound by residues 10–11 and histidine 18; that span reads SF. Lysine 42, threonine 79, and arginine 93 together coordinate substrate. Residues 94–96, glutamate 104, and 129–135 contribute to the ATP site; these read GLR and VRPITAT.

It belongs to the bacterial CoaD family. In terms of assembly, homohexamer. Mg(2+) serves as cofactor.

The protein resides in the cytoplasm. The enzyme catalyses (R)-4'-phosphopantetheine + ATP + H(+) = 3'-dephospho-CoA + diphosphate. It functions in the pathway cofactor biosynthesis; coenzyme A biosynthesis; CoA from (R)-pantothenate: step 4/5. In terms of biological role, reversibly transfers an adenylyl group from ATP to 4'-phosphopantetheine, yielding dephospho-CoA (dPCoA) and pyrophosphate. This Nitrobacter hamburgensis (strain DSM 10229 / NCIMB 13809 / X14) protein is Phosphopantetheine adenylyltransferase.